The sequence spans 424 residues: PtdIns3K complex I subunit atg38 (424 aa).

The stretch at 50-78 (LIKRCANNQIEELMVRIRELRESLPNKQT) forms a coiled coil. The required for interaction with atg8 stretch occupies residues 73–212 (LPNKQTPISM…DPAYQNTNEQ (140 aa)). Positions 178 to 181 (FLIV) match the AIM motif. Residues 268-284 (LSEEEMGRSHKREESFK) show a composition bias toward basic and acidic residues. A disordered region spans residues 268-299 (LSEEEMGRSHKREESFKRAFGHASSSESSIGE). Residues 390-420 (TVDSQLKIKQLETQIATLQKQLEQFQTSTLD) adopt a coiled-coil conformation.

This sequence belongs to the ATG38 family. As to quaternary structure, component of the autophagy-specific vps34 PI3-kinase complex I composed of vps15, atg6, pik3/vps34, atg14 and atg38. Interacts (via AIM motif) with atg8; the interaction is direct and leads to recruitment of the autophagy-specific vps34 PI3-kinase complex I to the phagophore assembly site.

It is found in the preautophagosomal structure membrane. The protein resides in the cytoplasm. The protein localises to the cytosol. Its function is as follows. Functions as a part of the autophagy-specific VPS34 PI3-kinase complex I that plays a role in autophagosome assembly. This complex is essential to recruit the atg8-phosphatidylinositol conjugate and the atg12-atg5 conjugate to the pre-autophagosomal structure. By binding to atg8 at the phagophore assembly site, atg38 helps establish a positive feedback loop for recruitment of phagophore assembly proteins, including atg8. The polypeptide is PtdIns3K complex I subunit atg38 (Schizosaccharomyces pombe (strain 972 / ATCC 24843) (Fission yeast)).